The primary structure comprises 533 residues: D-3-phosphoglycerate dehydrogenase (533 aa).

An N-acetylalanine modification is found at A2. Phosphoserine is present on S14. An N6-acetyllysine; alternate modification is found at K21. A Glycyl lysine isopeptide (Lys-Gly) (interchain with G-Cter in SUMO1); alternate cross-link involves residue K21. K21 participates in a covalent cross-link: Glycyl lysine isopeptide (Lys-Gly) (interchain with G-Cter in SUMO2); alternate. K58 bears the N6-acetyllysine mark. Residues T78, 155–156, D175, T207, 234–236, and D260 contribute to the NAD(+) site; these read RI and CAR. Phosphothreonine is present on T78. Residue R236 is part of the active site. E265 is a catalytic residue. H283 (proton donor) is an active-site residue. 283–286 serves as a coordination point for NAD(+); that stretch reads HLGA.

Belongs to the D-isomer specific 2-hydroxyacid dehydrogenase family. As to quaternary structure, homotetramer.

It carries out the reaction (2R)-3-phosphoglycerate + NAD(+) = 3-phosphooxypyruvate + NADH + H(+). The catalysed reaction is (R)-2-hydroxyglutarate + NAD(+) = 2-oxoglutarate + NADH + H(+). The enzyme catalyses (S)-malate + NAD(+) = oxaloacetate + NADH + H(+). Its pathway is amino-acid biosynthesis; L-serine biosynthesis; L-serine from 3-phospho-D-glycerate: step 1/3. In terms of biological role, catalyzes the reversible oxidation of 3-phospho-D-glycerate to 3-phosphonooxypyruvate, the first step of the phosphorylated L-serine biosynthesis pathway. Also catalyzes the reversible oxidation of 2-hydroxyglutarate to 2-oxoglutarate and the reversible oxidation of (S)-malate to oxaloacetate. The sequence is that of D-3-phosphoglycerate dehydrogenase (PHGDH) from Pongo abelii (Sumatran orangutan).